Consider the following 866-residue polypeptide: Thiamine diphosphate dependent-3-acetyloctanal synthase PigD (866 aa).

The tract at residues 826–866 (KGWQRDPSDREALQERKDWAARQPESTSTSFDQGQNKEAIS) is disordered. A compositionally biased stretch (basic and acidic residues) spans 828 to 845 (WQRDPSDREALQERKDWA). Polar residues predominate over residues 849–866 (PESTSTSFDQGQNKEAIS).

Belongs to the TPP enzyme family. The cofactor is thiamine diphosphate.

It catalyses the reaction (2E)-octenal + pyruvate + H(+) = (S)-3-acetyloctanal + CO2. The protein operates within antibiotic biosynthesis; prodigiosin biosynthesis. Functionally, involved in the biosynthesis of 2-methyl-3-n-amyl-pyrrole (MAP), one of the terminal products involved in the biosynthesis of the red antibiotic prodigiosin (Pig). Catalyzes the decarboxylation of pyruvate, followed by the modification of the resulting two-carbon fragment acetaldehyde at the C3 position of the 2-octenal (1,2-addition of acetaldehyde) giving 3-acetyloctanal. The chain is Thiamine diphosphate dependent-3-acetyloctanal synthase PigD from Serratia sp. (strain ATCC 39006) (Prodigiosinella confusarubida).